Consider the following 511-residue polypeptide: DNA nucleotidylexotransferase (511 aa).

Residues M1–T26 are disordered. The Nuclear localization signal signature appears at P11–R17. The region spanning P27–Q124 is the BRCT domain. Residue S134 is modified to Phosphoserine. The interval S151 to A511 is mediates interaction with DNTTIP2. Residues V258–T262 form an involved in DNA binding region. A 2'-deoxyribonucleoside 5'-triphosphate-binding positions include G333 to K338 and H342 to D345. D343, D345, and D435 together coordinate Mg(2+). G450–W451 is a binding site for a 2'-deoxyribonucleoside 5'-triphosphate.

The protein belongs to the DNA polymerase type-X family. Interacts with PRP19 and DNTTIP1. Forms a ternary complex with DNTTIP2 and core histone. Released from this complex by PCNA. Interacts with TRERF1. Mg(2+) is required as a cofactor.

It localises to the nucleus. The catalysed reaction is DNA(n) + a 2'-deoxyribonucleoside 5'-triphosphate = DNA(n+1) + diphosphate. Template-independent DNA polymerase which catalyzes the random addition of deoxynucleoside 5'-triphosphate to the 3'-end of a DNA initiator. One of the in vivo functions of this enzyme is the addition of nucleotides at the junction (N region) of rearranged Ig heavy chain and T-cell receptor gene segments during the maturation of B- and T-cells. This is DNA nucleotidylexotransferase (DNTT) from Eulemur macaco (Black lemur).